Consider the following 313-residue polypeptide: Ribosomal RNA small subunit methyltransferase H (313 aa).

S-adenosyl-L-methionine contacts are provided by residues G35–H37, D55, F81, D103, and Q110.

This sequence belongs to the methyltransferase superfamily. RsmH family.

Its subcellular location is the cytoplasm. It catalyses the reaction cytidine(1402) in 16S rRNA + S-adenosyl-L-methionine = N(4)-methylcytidine(1402) in 16S rRNA + S-adenosyl-L-homocysteine + H(+). Specifically methylates the N4 position of cytidine in position 1402 (C1402) of 16S rRNA. The protein is Ribosomal RNA small subunit methyltransferase H of Azotobacter vinelandii (strain DJ / ATCC BAA-1303).